The primary structure comprises 187 residues: PBAN-type neuropeptides (187 aa).

The N-terminal stretch at 1-22 (MSRFYFFFNLICLYLAIKSALS) is a signal peptide. Residues 23 to 64 (AELDTNDQKYADLRTTGRGESPDSTGPDSDTLRRDDGAEGLN) constitute a propeptide that is removed on maturation. Residues 34 to 43 (DLRTTGRGES) show a composition bias toward basic and acidic residues. Residues 34-58 (DLRTTGRGESPDSTGPDSDTLRRDD) are disordered. Leu76 carries the post-translational modification Leucine amide. Residues 80–127 (TIAADLHDDLVEEFDAEPLGYAGEPPQKLATELVQGAPYMVLLVTAKP) constitute a propeptide that is removed on maturation. Positions 132-163 (PIFYHTTSPRLGRRDSVGENHQRPPFAPRLGR) are disordered. Leu142 carries the leucine amide modification. Residues 143–153 (GRRDSVGENHQ) are compositionally biased toward basic and acidic residues. Leu161 and Leu171 each carry leucine amide. A propeptide spanning residues 174–187 (SYNGGYPLPFQFAY) is cleaved from the precursor.

Belongs to the pyrokinin family.

The protein resides in the secreted. A hormone that controls sex pheromone production in females and pheromone responsiveness in male. Also mediates visceral muscle contractile activity (myotropic activity). This Anopheles gambiae (African malaria mosquito) protein is PBAN-type neuropeptides.